The following is a 374-amino-acid chain: tRNA-specific 2-thiouridylase MnmA (374 aa).

Residues 13-20 (GMSGGVDS) and M39 contribute to the ATP site. An interaction with target base in tRNA region spans residues 99 to 101 (NPD). Residue C104 is the Nucleophile of the active site. C104 and C201 are joined by a disulfide. Position 128 (G128) interacts with ATP. Residues 151 to 153 (KDQ) form an interaction with tRNA region. Residue C201 is the Cysteine persulfide intermediate of the active site. The segment at 313–314 (RY) is interaction with tRNA.

This sequence belongs to the MnmA/TRMU family.

It is found in the cytoplasm. It catalyses the reaction S-sulfanyl-L-cysteinyl-[protein] + uridine(34) in tRNA + AH2 + ATP = 2-thiouridine(34) in tRNA + L-cysteinyl-[protein] + A + AMP + diphosphate + H(+). Its function is as follows. Catalyzes the 2-thiolation of uridine at the wobble position (U34) of tRNA, leading to the formation of s(2)U34. This Streptococcus equi subsp. zooepidemicus (strain H70) protein is tRNA-specific 2-thiouridylase MnmA.